The primary structure comprises 397 residues: GDNF family receptor alpha-3 (397 aa).

An N-terminal signal peptide occupies residues Met1 to Gly28. A disulfide bridge connects residues Cys48 and Cys54. Residues Asn92 and Asn145 are each glycosylated (N-linked (GlcNAc...) asparagine). 10 cysteine pairs are disulfide-bonded: Cys159–Cys215, Cys166–Cys172, Cys183–Cys193, Cys188–Cys236, Cys217–Cys224, Cys245–Cys313, Cys252–Cys258, Cys269–Cys285, Cys278–Cys337, and Cys315–Cys325. Asn306 is a glycosylation site (N-linked (GlcNAc...) asparagine). Asn371 carries GPI-anchor amidated asparagine lipidation. Residues Pro372–Trp397 constitute a propeptide, removed in mature form.

Belongs to the GDNFR family. In terms of assembly, interacts with ARTN ligand and RET: forms a 2:2:2 ternary complex composed of ARTN ligand, GFRA3 and RET receptor. Interacts with SORL1.

The protein resides in the cell membrane. Receptor for artemin (ARTN), a growth factor that supports the survival of sensory and sympathetic peripheral neurons. ARTN-binding leads to autophosphorylation and activation of the RET receptor. The chain is GDNF family receptor alpha-3 (Gfra3) from Mus musculus (Mouse).